Consider the following 175-residue polypeptide: Large ribosomal subunit protein uL6 (175 aa).

It belongs to the universal ribosomal protein uL6 family. As to quaternary structure, part of the 50S ribosomal subunit.

This protein binds to the 23S rRNA, and is important in its secondary structure. It is located near the subunit interface in the base of the L7/L12 stalk, and near the tRNA binding site of the peptidyltransferase center. In Xylella fastidiosa (strain M12), this protein is Large ribosomal subunit protein uL6.